A 257-amino-acid polypeptide reads, in one-letter code: Zinc transporter ZupT (257 aa).

3 helical membrane passes run 5-25 (LILTILAGAATFIGAFLGVLG), 32-52 (LLAFSLGFAAGIMLLISLMEM), and 61-81 (GMSPVLGYGMFIFGLLGYFGL). Fe(2+) contacts are provided by asparagine 120 and glutamate 123. The Zn(2+) site is built by glutamate 123 and histidine 148. The next 4 helical transmembrane spans lie at 137 to 157 (LGFGIALAVALHNIPEGLAVA), 171 to 191 (ILWAGISGLAEILGGVLAWLI), 195 to 215 (MISPVVMAAIMAVVAGIMVAL), and 236 to 256 (GVLCGMSVMGFSLVLLQTAGI). Asparagine 149, glutamate 152, and glutamate 181 together coordinate Fe(2+). Position 152 (glutamate 152) interacts with Zn(2+).

The protein belongs to the ZIP transporter (TC 2.A.5) family. ZupT subfamily.

Its subcellular location is the cell inner membrane. The catalysed reaction is Zn(2+)(in) = Zn(2+)(out). In terms of biological role, mediates zinc uptake. May also transport other divalent cations. The polypeptide is Zinc transporter ZupT (Escherichia coli O7:K1 (strain IAI39 / ExPEC)).